Consider the following 445-residue polypeptide: mRNA cleavage and polyadenylation factor CLP1 (445 aa).

Residues aspartate 33, lysine 72, and 133–138 contribute to the ATP site; that span reads QTGKTS.

It belongs to the Clp1 family. Clp1 subfamily. Component of the cleavage factor IA (CF IA) complex, which is a heterohexameric complex with 2:2:1:1 stoichiometry of RNA14, RNA15, PCF11 and CLP1. It contains 2 copies of an RNA14-RNA15 dimer and 1 copy of CLP1-PCF11. The complex interacts with the cleavage factor HRB1/CF IB to form the cleavage factor I (CF I) complex, and binds to RNA. Interacts directly with PCF11. Interacts with the CPF components CFT1, PTA1, PFS2, YSH1 and SSU72.

The protein localises to the nucleus. Its function is as follows. Component of the cleavage factor IA (CF IA) complex, which is involved in the endonucleolytic cleavage during polyadenylation-dependent pre-mRNA 3'-end formation. Associates with HRB1/CF IB to form the cleavage factor I (CF I) complex. CF I is required for correct positioning of a larger protein complex, the cleavage and polyadenylation factor (CPF) complex, which contains the catalytic subunits executing mRNA cleavage and polyadenylation. CLP1 mediates interactions between CF IA and CPF factors. CLP1 is also involved in maintaining the CF IA interaction with the C-terminal domain of RNA Pol II largest subunit via PCF11, which links pre-mRNA 3'-end processing to transcription termination. This is mRNA cleavage and polyadenylation factor CLP1 from Saccharomyces cerevisiae (strain YJM789) (Baker's yeast).